We begin with the raw amino-acid sequence, 399 residues long: S-adenosylmethionine synthase (399 aa).

An ATP-binding site is contributed by His-17. Mg(2+) is bound at residue Asp-19. A K(+)-binding site is contributed by Glu-45. Glu-58 and Gln-101 together coordinate L-methionine. The flexible loop stretch occupies residues Gln-101–Gln-111. ATP is bound by residues Asp-177–Lys-179, Arg-244–Phe-245, Asp-253, Arg-259–Lys-260, Ala-276, and Lys-280. Asp-253 contributes to the L-methionine binding site. Lys-284 is an L-methionine binding site.

The protein belongs to the AdoMet synthase family. As to quaternary structure, homotetramer; dimer of dimers. Requires Mg(2+) as cofactor. The cofactor is K(+).

It localises to the cytoplasm. It carries out the reaction L-methionine + ATP + H2O = S-adenosyl-L-methionine + phosphate + diphosphate. It participates in amino-acid biosynthesis; S-adenosyl-L-methionine biosynthesis; S-adenosyl-L-methionine from L-methionine: step 1/1. In terms of biological role, catalyzes the formation of S-adenosylmethionine (AdoMet) from methionine and ATP. The overall synthetic reaction is composed of two sequential steps, AdoMet formation and the subsequent tripolyphosphate hydrolysis which occurs prior to release of AdoMet from the enzyme. The polypeptide is S-adenosylmethionine synthase (Bacillus thuringiensis (strain Al Hakam)).